A 417-amino-acid polypeptide reads, in one-letter code: UPF0761 membrane protein Veis_3782 (417 aa).

6 helical membrane-spanning segments follow: residues isoleucine 54–phenylalanine 74, glycine 111–isoleucine 131, valine 151–leucine 171, phenylalanine 192–tyrosine 212, glycine 226–glycine 246, and leucine 261–valine 281.

The protein belongs to the UPF0761 family.

Its subcellular location is the cell inner membrane. This Verminephrobacter eiseniae (strain EF01-2) protein is UPF0761 membrane protein Veis_3782.